We begin with the raw amino-acid sequence, 540 residues long: GMP synthase [glutamine-hydrolyzing] (540 aa).

One can recognise a Glutamine amidotransferase type-1 domain in the interval Lys-24–Asp-217. Cys-101 serves as the catalytic Nucleophile. Residues His-191 and Glu-193 contribute to the active site. The 198-residue stretch at Trp-218 to Arg-415 folds into the GMPS ATP-PPase domain. Ser-245 to Ser-251 provides a ligand contact to ATP.

Homodimer.

It catalyses the reaction XMP + L-glutamine + ATP + H2O = GMP + L-glutamate + AMP + diphosphate + 2 H(+). Its pathway is purine metabolism; GMP biosynthesis; GMP from XMP (L-Gln route): step 1/1. Catalyzes the synthesis of GMP from XMP. The polypeptide is GMP synthase [glutamine-hydrolyzing] (Nitrobacter hamburgensis (strain DSM 10229 / NCIMB 13809 / X14)).